A 145-amino-acid chain; its full sequence is Cystatin-like 1 (145 aa).

Residues 1 to 19 form the signal peptide; it reads MGIGCWRNPLLLLIALVLS. The Cystatin domain maps to 37 to 115; it reads SKKNMNSTLN…KKLRKSLICE (79 aa). The N-linked (GlcNAc...) asparagine glycan is linked to asparagine 42. Disulfide bonds link cysteine 91–cysteine 101 and cysteine 114–cysteine 134.

This sequence belongs to the cystatin family.

The protein localises to the secreted. In Homo sapiens (Human), this protein is Cystatin-like 1 (CSTL1).